A 261-amino-acid polypeptide reads, in one-letter code: Triosephosphate isomerase (261 aa).

10–12 serves as a coordination point for substrate; sequence NWK. His100 acts as the Electrophile in catalysis. The active-site Proton acceptor is the Glu172. Substrate contacts are provided by residues Gly178, Ser218, and 239 to 240; that span reads GG.

This sequence belongs to the triosephosphate isomerase family. As to quaternary structure, homodimer.

Its subcellular location is the cytoplasm. The enzyme catalyses D-glyceraldehyde 3-phosphate = dihydroxyacetone phosphate. It functions in the pathway carbohydrate biosynthesis; gluconeogenesis. It participates in carbohydrate degradation; glycolysis; D-glyceraldehyde 3-phosphate from glycerone phosphate: step 1/1. In terms of biological role, involved in the gluconeogenesis. Catalyzes stereospecifically the conversion of dihydroxyacetone phosphate (DHAP) to D-glyceraldehyde-3-phosphate (G3P). This chain is Triosephosphate isomerase, found in Rhodococcus jostii (strain RHA1).